Here is a 289-residue protein sequence, read N- to C-terminus: tRNA dimethylallyltransferase (289 aa).

ATP is bound at residue 9-16 (GTTASGKT). Position 11–16 (11–16 (TASGKT)) interacts with substrate. The tract at residues 34–37 (DSLC) is interaction with substrate tRNA.

This sequence belongs to the IPP transferase family. As to quaternary structure, monomer. It depends on Mg(2+) as a cofactor.

It catalyses the reaction adenosine(37) in tRNA + dimethylallyl diphosphate = N(6)-dimethylallyladenosine(37) in tRNA + diphosphate. Functionally, catalyzes the transfer of a dimethylallyl group onto the adenine at position 37 in tRNAs that read codons beginning with uridine, leading to the formation of N6-(dimethylallyl)adenosine (i(6)A). This is tRNA dimethylallyltransferase from Campylobacter jejuni subsp. jejuni serotype O:23/36 (strain 81-176).